A 448-amino-acid polypeptide reads, in one-letter code: Deoxyguanosinetriphosphate triphosphohydrolase-like protein (448 aa).

A disordered region spans residues Met-1–Arg-26. Residues Phe-11–Arg-26 show a composition bias toward basic and acidic residues. The HD domain occupies Arg-59–Ala-272.

The protein belongs to the dGTPase family. Type 2 subfamily.

The chain is Deoxyguanosinetriphosphate triphosphohydrolase-like protein from Histophilus somni (strain 129Pt) (Haemophilus somnus).